Consider the following 192-residue polypeptide: dTTP/UTP pyrophosphatase (192 aa).

Asp70 functions as the Proton acceptor in the catalytic mechanism.

This sequence belongs to the Maf family. YhdE subfamily. The cofactor is a divalent metal cation.

Its subcellular location is the cytoplasm. It catalyses the reaction dTTP + H2O = dTMP + diphosphate + H(+). The enzyme catalyses UTP + H2O = UMP + diphosphate + H(+). Its function is as follows. Nucleoside triphosphate pyrophosphatase that hydrolyzes dTTP and UTP. May have a dual role in cell division arrest and in preventing the incorporation of modified nucleotides into cellular nucleic acids. This Clostridium perfringens (strain SM101 / Type A) protein is dTTP/UTP pyrophosphatase.